The sequence spans 106 residues: Protein yippee-like At4g27745 (106 aa).

One can recognise a Yippee domain in the interval 8-105 (RLYSCCNCRN…FEKAKIVKED (98 aa)). Residues Cys-12, Cys-15, Cys-68, and Cys-71 each contribute to the Zn(2+) site.

Belongs to the yippee family.

The sequence is that of Protein yippee-like At4g27745 from Arabidopsis thaliana (Mouse-ear cress).